Reading from the N-terminus, the 480-residue chain is Aspartyl/glutamyl-tRNA(Asn/Gln) amidotransferase subunit B (480 aa).

The protein belongs to the GatB/GatE family. GatB subfamily. In terms of assembly, heterotrimer of A, B and C subunits.

The enzyme catalyses L-glutamyl-tRNA(Gln) + L-glutamine + ATP + H2O = L-glutaminyl-tRNA(Gln) + L-glutamate + ADP + phosphate + H(+). It catalyses the reaction L-aspartyl-tRNA(Asn) + L-glutamine + ATP + H2O = L-asparaginyl-tRNA(Asn) + L-glutamate + ADP + phosphate + 2 H(+). Its function is as follows. Allows the formation of correctly charged Asn-tRNA(Asn) or Gln-tRNA(Gln) through the transamidation of misacylated Asp-tRNA(Asn) or Glu-tRNA(Gln) in organisms which lack either or both of asparaginyl-tRNA or glutaminyl-tRNA synthetases. The reaction takes place in the presence of glutamine and ATP through an activated phospho-Asp-tRNA(Asn) or phospho-Glu-tRNA(Gln). This chain is Aspartyl/glutamyl-tRNA(Asn/Gln) amidotransferase subunit B, found in Streptococcus thermophilus (strain ATCC BAA-250 / LMG 18311).